Here is a 939-residue protein sequence, read N- to C-terminus: AP-2 complex subunit alpha-2 (939 aa).

Residues 11–12, Lys43, Tyr53, and 57–61 each bind a 1,2-diacyl-sn-glycero-3-phospho-(1D-myo-inositol-3,4,5-trisphosphate); these read RG and KYVCK. The interval 612-681 is disordered; the sequence is LAKLKKKKGP…AGPPPSSGGS (70 aa). The segment covering 646–667 has biased composition (low complexity); it reads PASTSAVSTPSPSADLLGLGAA. A compositionally biased stretch (pro residues) spans 668 to 677; it reads PPAPAGPPPS.

The protein belongs to the adaptor complexes large subunit family. Adaptor protein complex 2 (AP-2) is a heterotetramer composed of two large adaptins (alpha-type subunit AP2A1 or AP2A2 and beta-type subunit AP2B1), a medium adaptin (mu-type subunit AP2M1) and a small adaptin (sigma-type subunit AP2S1). Binds EPN1, EPS15, AMPH, SNAP91 and BIN1. Interacts with HIP1. Interacts with DGKD. Interacts with DENND1A, DENND1B and DENND1C. Interacts with FCHO1 and DAB2. Interacts with ATAT1; this interaction is required for efficient alpha-tubulin acetylation by ATAT1. Interacts with KIAA1107. Together with AP2B1 and AP2M1, it interacts with ADAM10; this interaction facilitates ADAM10 endocytosis from the plasma membrane during long-term potentiation in hippocampal neurons. Interacts with CLN3 (via dileucine motif). Interacts with ABCB11; this interaction regulates cell membrane expression of ABCB11 through its internalization in a clathrin-dependent manner and its subsequent degradation. Interacts with Cacfd1. Interacts with DNAJC6. As to expression, expressed in the brain (at protein level).

The protein resides in the cell membrane. The protein localises to the membrane. Its subcellular location is the coated pit. In terms of biological role, component of the adaptor protein complex 2 (AP-2). Adaptor protein complexes function in protein transport via transport vesicles in different membrane traffic pathways. Adaptor protein complexes are vesicle coat components and appear to be involved in cargo selection and vesicle formation. AP-2 is involved in clathrin-dependent endocytosis in which cargo proteins are incorporated into vesicles surrounded by clathrin (clathrin-coated vesicles, CCVs) which are destined for fusion with the early endosome. The clathrin lattice serves as a mechanical scaffold but is itself unable to bind directly to membrane components. Clathrin-associated adaptor protein (AP) complexes which can bind directly to both the clathrin lattice and to the lipid and protein components of membranes are considered to be the major clathrin adaptors contributing the CCV formation. AP-2 also serves as a cargo receptor to selectively sort the membrane proteins involved in receptor-mediated endocytosis. AP-2 seems to play a role in the recycling of synaptic vesicle membranes from the presynaptic surface. AP-2 recognizes Y-X-X-[FILMV] (Y-X-X-Phi) and [ED]-X-X-X-L-[LI] endocytosis signal motifs within the cytosolic tails of transmembrane cargo molecules. AP-2 may also play a role in maintaining normal post-endocytic trafficking through the ARF6-regulated, non-clathrin pathway. During long-term potentiation in hippocampal neurons, AP-2 is responsible for the endocytosis of ADAM10. The AP-2 alpha subunit binds polyphosphoinositide-containing lipids, positioning AP-2 on the membrane. The AP-2 alpha subunit acts via its C-terminal appendage domain as a scaffolding platform for endocytic accessory proteins. The AP-2 alpha and AP-2 sigma subunits are thought to contribute to the recognition of the [ED]-X-X-X-L-[LI] motif. This is AP-2 complex subunit alpha-2 (AP2A2) from Homo sapiens (Human).